Reading from the N-terminus, the 237-residue chain is Uridylate kinase (237 aa).

Lys-9–Gly-12 is an ATP binding site. An involved in allosteric activation by GTP region spans residues Gly-17–Gly-22. Gly-51 is a UMP binding site. Residues Gly-52 and Arg-56 each contribute to the ATP site. UMP-binding positions include Asp-71 and Cys-132–Thr-139. Residues Thr-159, Tyr-165, and Asp-168 each contribute to the ATP site.

This sequence belongs to the UMP kinase family. In terms of assembly, homohexamer.

The protein localises to the cytoplasm. The catalysed reaction is UMP + ATP = UDP + ADP. Its pathway is pyrimidine metabolism; CTP biosynthesis via de novo pathway; UDP from UMP (UMPK route): step 1/1. Allosterically activated by GTP. Inhibited by UTP. In terms of biological role, catalyzes the reversible phosphorylation of UMP to UDP. The polypeptide is Uridylate kinase (Synechococcus sp. (strain CC9902)).